The following is a 668-amino-acid chain: L-type lectin-domain containing receptor kinase I.7 (668 aa).

An N-terminal signal peptide occupies residues 1 to 21 (MIRGLLLGIIWMIFCVCSSFQ). The Extracellular portion of the chain corresponds to 22–285 (QETPFVYNNF…SSTKKKSTSP (264 aa)). The interval 24–256 (TPFVYNNFGH…YQYILGWSFS (233 aa)) is legume-lectin like. 5 N-linked (GlcNAc...) asparagine glycosylation sites follow: N56, N125, N167, N201, and N223. A helical transmembrane segment spans residues 286-306 (VLSVLLGLIAFIVLGILVVAY). At 307-668 (LYRRNLYSEV…THSVLYGSGR (362 aa)) the chain is on the cytoplasmic side. Positions 341–620 (FNRSEFLGRG…LNGNLALPEF (280 aa)) constitute a Protein kinase domain. ATP-binding positions include 347 to 355 (LGRGGFGEV) and K372. The Proton acceptor role is filled by D468.

This sequence in the C-terminal section; belongs to the protein kinase superfamily. Ser/Thr protein kinase family. In the N-terminal section; belongs to the leguminous lectin family.

The protein localises to the cell membrane. The catalysed reaction is L-seryl-[protein] + ATP = O-phospho-L-seryl-[protein] + ADP + H(+). It catalyses the reaction L-threonyl-[protein] + ATP = O-phospho-L-threonyl-[protein] + ADP + H(+). Its function is as follows. Involved in resistance response to the pathogenic oomycetes Phytophthora infestans and Phytophthora capsici. This chain is L-type lectin-domain containing receptor kinase I.7, found in Arabidopsis thaliana (Mouse-ear cress).